A 529-amino-acid polypeptide reads, in one-letter code: Glutamyl-tRNA(Gln) amidotransferase subunit B-2, chloroplastic/mitochondrial (529 aa).

Residues 17-61 are disordered; it reads STRVSLPRGSIPPPPTSSSSSSSSSREGRRPRFFSTTTTSAERPV.

Belongs to the GatB/GatE family. GatB subfamily. As to quaternary structure, subunit of the heterotrimeric GatCAB amidotransferase (AdT) complex, composed of A, B and C subunits.

It localises to the mitochondrion. The protein localises to the plastid. The protein resides in the chloroplast. The catalysed reaction is L-glutamyl-tRNA(Gln) + L-glutamine + ATP + H2O = L-glutaminyl-tRNA(Gln) + L-glutamate + ADP + phosphate + H(+). In terms of biological role, allows the formation of correctly charged Gln-tRNA(Gln) through the transamidation of misacylated Glu-tRNA(Gln) in chloroplasts and mitochondria. The reaction takes place in the presence of glutamine and ATP through an activated gamma-phospho-Glu-tRNA(Gln). The chain is Glutamyl-tRNA(Gln) amidotransferase subunit B-2, chloroplastic/mitochondrial from Micromonas commoda (strain RCC299 / NOUM17 / CCMP2709) (Picoplanktonic green alga).